Reading from the N-terminus, the 152-residue chain is Superoxide dismutase [Cu-Zn] 4A (152 aa).

Cu cation contacts are provided by histidine 45, histidine 47, and histidine 62. Residues cysteine 56 and cysteine 145 are joined by a disulfide bond. Zn(2+)-binding residues include histidine 62, histidine 70, histidine 79, and aspartate 82. Position 119 (histidine 119) interacts with Cu cation.

This sequence belongs to the Cu-Zn superoxide dismutase family. As to quaternary structure, homodimer. Requires Cu cation as cofactor. Zn(2+) serves as cofactor.

It is found in the cytoplasm. The enzyme catalyses 2 superoxide + 2 H(+) = H2O2 + O2. In terms of biological role, destroys radicals which are normally produced within the cells and which are toxic to biological systems. The protein is Superoxide dismutase [Cu-Zn] 4A (SODCC.3) of Zea mays (Maize).